The chain runs to 184 residues: ADP-ribosylation factor-like protein 2 (184 aa).

Residue glycine 2 is the site of N-myristoyl glycine attachment. GTP-binding positions include 23–30 (GLDNAGKT), 66–70 (DVGGQ), and 125–128 (NKQD).

Belongs to the small GTPase superfamily. Arf family. Ubiquitously expressed.

Its function is as follows. GTP-binding protein involved in protein trafficking; may modulate vesicle budding and uncoating within the Golgi apparatus. The polypeptide is ADP-ribosylation factor-like protein 2 (Arl2) (Drosophila melanogaster (Fruit fly)).